The chain runs to 907 residues: Protein translocase subunit SecA (907 aa).

ATP is bound by residues Q87, 105-109, and D513; that span reads GEGKT. Residues 841–853 show a composition bias toward basic and acidic residues; sequence EAQRRAQAEEAAR. A disordered region spans residues 841–907; that stretch reads EAQRRAQAEE…KYKQCHGQIN (67 aa). A compositionally biased stretch (low complexity) spans 854 to 865; it reads RAQAQHASAQSQ. A compositionally biased stretch (basic and acidic residues) spans 872–887; it reads EGHHQPVVRDERKVGR. The Zn(2+) site is built by C891, C893, C902, and H903.

Belongs to the SecA family. In terms of assembly, monomer and homodimer. Part of the essential Sec protein translocation apparatus which comprises SecA, SecYEG and auxiliary proteins SecDF-YajC and YidC. The cofactor is Zn(2+).

The protein localises to the cell inner membrane. The protein resides in the cytoplasm. The enzyme catalyses ATP + H2O + cellular proteinSide 1 = ADP + phosphate + cellular proteinSide 2.. Part of the Sec protein translocase complex. Interacts with the SecYEG preprotein conducting channel. Has a central role in coupling the hydrolysis of ATP to the transfer of proteins into and across the cell membrane, serving both as a receptor for the preprotein-SecB complex and as an ATP-driven molecular motor driving the stepwise translocation of polypeptide chains across the membrane. In Vibrio vulnificus (strain YJ016), this protein is Protein translocase subunit SecA.